The chain runs to 141 residues: Translation initiation factor 2 subunit beta (141 aa).

This sequence belongs to the eIF-2-beta/eIF-5 family. Heterotrimer composed of an alpha, a beta and a gamma chain.

EIF-2 functions in the early steps of protein synthesis by forming a ternary complex with GTP and initiator tRNA. This is Translation initiation factor 2 subunit beta from Sulfolobus acidocaldarius (strain ATCC 33909 / DSM 639 / JCM 8929 / NBRC 15157 / NCIMB 11770).